We begin with the raw amino-acid sequence, 126 residues long: MAIVGIGTDIVEIARISEQRERLGDRLARRVLTEPELATYMQSKQPERFLAKRFAAKEAAAKALGTGIGRGVSFQHIHIDNDANGAPQVRFTDGALARLEQLAGKHGFISIADEKHYAVATVVLES.

Mg(2+) contacts are provided by aspartate 9 and glutamate 58.

This sequence belongs to the P-Pant transferase superfamily. AcpS family. Requires Mg(2+) as cofactor.

Its subcellular location is the cytoplasm. It catalyses the reaction apo-[ACP] + CoA = holo-[ACP] + adenosine 3',5'-bisphosphate + H(+). Functionally, transfers the 4'-phosphopantetheine moiety from coenzyme A to a Ser of acyl-carrier-protein. The chain is Holo-[acyl-carrier-protein] synthase from Shewanella frigidimarina (strain NCIMB 400).